The primary structure comprises 136 residues: Small ribosomal subunit protein uS9 (136 aa).

A disordered region spans residues 111–136 (DARRTEPHKPSRSTKGPRAKRQKSYR). A compositionally biased stretch (basic residues) spans 120–136 (PSRSTKGPRAKRQKSYR).

Belongs to the universal ribosomal protein uS9 family.

In Methanocaldococcus jannaschii (strain ATCC 43067 / DSM 2661 / JAL-1 / JCM 10045 / NBRC 100440) (Methanococcus jannaschii), this protein is Small ribosomal subunit protein uS9 (rps9).